Consider the following 431-residue polypeptide: Protein EARLY STARVATION 1, chloroplastic (431 aa).

Residues 1–19 (MAACSRGLVARPFDLTARG) constitute a chloroplast transit peptide. Disordered stretches follow at residues 65–126 (GNKP…DTGI) and 403–431 (GVYPTIDFSASSPAPPSDDPPGMPPSPLE). Residues 415 to 431 (PAPPSDDPPGMPPSPLE) are compositionally biased toward pro residues.

It belongs to the ESV1 family.

It localises to the plastid. It is found in the chloroplast stroma. Binds preferentially to highly ordered alpha-glucans, such as starch and crystalline maltodextrins. Involved in the organization of the starch granule matrix, thus influencing starch turnover by modulating the accessibility of starch polymers to modifying and degrading enzymes. Required for the control of starch degradation in leaves and starch distribution in nonphotosynthetic parts. Promotes gravitropic responses, negative in shoots but positive in roots, by facilitating starch granules (statoliths) formation in hypocotyls and roots columella. Facilitates tight packing of starch granules in grains. The polypeptide is Protein EARLY STARVATION 1, chloroplastic (Oryza sativa subsp. indica (Rice)).